A 631-amino-acid polypeptide reads, in one-letter code: 2-isopropylmalate synthase 2, chloroplastic (631 aa).

Residues 1–46 (MESSILKSPNLSSPSFGVPSIPALSSSSTSPFSSLHLRSQNHRTIS) constitute a chloroplast transit peptide. Positions 87–360 (VRIFDTTLRD…FTGIDTRHIV (274 aa)) constitute a Pyruvate carboxyltransferase domain. A divalent metal cation contacts are provided by Asp-96, His-293, and Asn-329.

Belongs to the alpha-IPM synthase/homocitrate synthase family. LeuA type 1 subfamily. As to quaternary structure, homotetramer. Requires Mg(2+) as cofactor. Mn(2+) serves as cofactor. In terms of tissue distribution, expressed in roots, stems, leaves, flowers and siliques.

It localises to the plastid. The protein localises to the chloroplast. The catalysed reaction is 3-methyl-2-oxobutanoate + acetyl-CoA + H2O = (2S)-2-isopropylmalate + CoA + H(+). Its pathway is amino-acid biosynthesis; L-leucine biosynthesis; L-leucine from 3-methyl-2-oxobutanoate: step 1/4. Its activity is regulated as follows. Feedback inhibition by Leu. In terms of biological role, catalyzes the condensation of the acetyl group of acetyl-CoA with 3-methyl-2-oxobutanoate (2-oxoisovalerate) to form 3-carboxy-3-hydroxy-4-methylpentanoate (2-isopropylmalate). Involved in Leu biosynthesis, but does not participate in the chain elongation of glucosinolates. The protein is 2-isopropylmalate synthase 2, chloroplastic of Arabidopsis thaliana (Mouse-ear cress).